The chain runs to 334 residues: Leucine-rich repeat-containing protein 39 (334 aa).

10 LRR repeats span residues Glu59–Leu82, Asn83–Phe105, Gln106–Leu128, Thr129–Cys151, Ser153–Leu175, Leu176–Met198, Pro199–Met221, Ser223–Met244, Lys245–Ser269, and Phe272–Glu295.

In terms of assembly, interacts with MYH7 (via C-terminus). As to expression, expressed in heart and skeletal muscle (at protein level). Also detected in kidney (at protein level). Not detected in other tissues tested (at protein level).

It is found in the cytoplasm. The protein resides in the myofibril. It localises to the sarcomere. Its subcellular location is the m line. In terms of biological role, component of the sarcomeric M-band which plays a role in myocyte response to biomechanical stress. May regulate expression of other M-band proteins via an SRF-dependent pathway. Important for normal contractile function in heart. The protein is Leucine-rich repeat-containing protein 39 of Rattus norvegicus (Rat).